A 574-amino-acid chain; its full sequence is Putative DNA-directed RNA polymerase subunit alpha-like 1 (574 aa).

Residues 1–352 (MTNNKNFADW…ELFSLFLQTS (352 aa)) form an alpha N-terminal domain (alpha-NTD) region. The tract at residues 419-574 (PDYDRYNSIT…RERKRGNREF (156 aa)) is alpha C-terminal domain (alpha-CTD). Residues 534–574 (QETLRKEQDEQSSQQQKDQMEKRRWERQNRERERKRGNREF) form a disordered region. Positions 551 to 574 (DQMEKRRWERQNRERERKRGNREF) are enriched in basic and acidic residues.

Belongs to the RNA polymerase alpha chain family. In plastids the minimal PEP RNA polymerase catalytic core is composed of four subunits: alpha, beta, beta', and beta''. When a (nuclear-encoded) sigma factor is associated with the core the holoenzyme is formed, which can initiate transcription.

The protein resides in the plastid. The protein localises to the chloroplast. The enzyme catalyses RNA(n) + a ribonucleoside 5'-triphosphate = RNA(n+1) + diphosphate. DNA-dependent RNA polymerase catalyzes the transcription of DNA into RNA using the four ribonucleoside triphosphates as substrates. The chain is Putative DNA-directed RNA polymerase subunit alpha-like 1 (rpoAL1-A) from Pelargonium hortorum (Common geranium).